A 104-amino-acid chain; its full sequence is Nucleoid-associated protein jk2011 (104 aa).

Belongs to the YbaB/EbfC family. Homodimer.

It is found in the cytoplasm. The protein localises to the nucleoid. Functionally, binds to DNA and alters its conformation. May be involved in regulation of gene expression, nucleoid organization and DNA protection. The polypeptide is Nucleoid-associated protein jk2011 (Corynebacterium jeikeium (strain K411)).